We begin with the raw amino-acid sequence, 383 residues long: Guanine nucleotide-binding protein G(s) subunit alpha (383 aa).

The segment at 1-31 (MGCFGSAGSKQSDSNSSEDTKSQKRRSDAIT) is disordered. A lipid anchor (N-palmitoyl glycine) is attached at G2. C3 is lipidated: S-palmitoyl cysteine. Positions 8–17 (GSKQSDSNSS) are enriched in polar residues. Positions 18–31 (EDTKSQKRRSDAIT) are enriched in basic and acidic residues. In terms of domain architecture, G-alpha spans 43–383 (ATHRLLLLGA…RMHLRQYELL (341 aa)). Residues 46–59 (RLLLLGAGESGKST) form a G1 motif region. Residues 51-58 (GAGESGKS), 187-193 (LRCRVLT), 212-216 (DVGGQ), 281-284 (NKQD), and A355 contribute to the GTP site. Residues S58 and T193 each coordinate Mg(2+). The interval 185-193 (DILRCRVLT) is G2 motif. A G3 motif region spans residues 208–217 (FHMFDVGGQR). Positions 277–284 (ILFLNKQD) are G4 motif. The segment at 353-358 (TCAVDT) is G5 motif.

Belongs to the G-alpha family. G(s) subfamily. As to quaternary structure, g proteins are composed of 3 units; alpha, beta and gamma. The alpha chain contains the guanine nucleotide binding site.

Its function is as follows. Guanine nucleotide-binding proteins (G proteins) are involved as modulators or transducers in various transmembrane signaling systems. The G(s) protein is involved in hormonal regulation of adenylate cyclase: it activates the cyclase. Participates in olfactory signal transduction. This Anopheles gambiae (African malaria mosquito) protein is Guanine nucleotide-binding protein G(s) subunit alpha.